The sequence spans 645 residues: Chaperone protein DnaK (645 aa).

Thr-201 carries the post-translational modification Phosphothreonine; by autocatalysis. Positions 606–629 are enriched in low complexity; sequence NTNNATAGDNNTTDTGSSSNSDGS. The segment at 606 to 645 is disordered; it reads NTNNATAGDNNTTDTGSSSNSDGSKVVDSDYQEIDKKDGK. Residues 630–645 show a composition bias toward basic and acidic residues; the sequence is KVVDSDYQEIDKKDGK.

The protein belongs to the heat shock protein 70 family.

Acts as a chaperone. The polypeptide is Chaperone protein DnaK (Ehrlichia ruminantium (strain Welgevonden)).